Reading from the N-terminus, the 267-residue chain is Tryptophan synthase alpha chain (267 aa).

Residues Glu-49 and Asp-60 each act as proton acceptor in the active site.

It belongs to the TrpA family. Tetramer of two alpha and two beta chains.

The enzyme catalyses (1S,2R)-1-C-(indol-3-yl)glycerol 3-phosphate + L-serine = D-glyceraldehyde 3-phosphate + L-tryptophan + H2O. It functions in the pathway amino-acid biosynthesis; L-tryptophan biosynthesis; L-tryptophan from chorismate: step 5/5. The alpha subunit is responsible for the aldol cleavage of indoleglycerol phosphate to indole and glyceraldehyde 3-phosphate. The protein is Tryptophan synthase alpha chain of Acidothermus cellulolyticus (strain ATCC 43068 / DSM 8971 / 11B).